We begin with the raw amino-acid sequence, 123 residues long: Large ribosomal subunit protein uL14 (123 aa).

This sequence belongs to the universal ribosomal protein uL14 family. Part of the 50S ribosomal subunit. Forms a cluster with proteins L3 and L19. In the 70S ribosome, L14 and L19 interact and together make contacts with the 16S rRNA in bridges B5 and B8.

Binds to 23S rRNA. Forms part of two intersubunit bridges in the 70S ribosome. The sequence is that of Large ribosomal subunit protein uL14 from Wigglesworthia glossinidia brevipalpis.